Here is a 135-residue protein sequence, read N- to C-terminus: Holo-[acyl-carrier-protein] synthase (135 aa).

Residues aspartate 9 and glutamate 63 each contribute to the Mg(2+) site.

The protein belongs to the P-Pant transferase superfamily. AcpS family. It depends on Mg(2+) as a cofactor.

Its subcellular location is the cytoplasm. The catalysed reaction is apo-[ACP] + CoA = holo-[ACP] + adenosine 3',5'-bisphosphate + H(+). Functionally, transfers the 4'-phosphopantetheine moiety from coenzyme A to a Ser of acyl-carrier-protein. The chain is Holo-[acyl-carrier-protein] synthase from Paraburkholderia phymatum (strain DSM 17167 / CIP 108236 / LMG 21445 / STM815) (Burkholderia phymatum).